Reading from the N-terminus, the 428-residue chain is MNYLFKNGRYLNEEGTIVATDLLVQDGKIAKIAKNISAENAEVIDVNGKLIAPGLVDVHVHLREPGGEHKETIETGTLAAAKGGFTTICAMPNTRPVPDSKEHMEDLQKRIQEKAHVNVLPYGAITVRQAGSEMTDFETLKELGAFAFTDDGVGVQDASMMLAAMKRAAKLNMAVVAHCEENTLINKGCVHEGKFSEKHGLNGIPSVCESVHIARDILLAEAADCHYHVCHVSTKGSVRVIRDAKRAGIKVTAEVTPHHLVLCEDDIPSVDPNFKMNPPLRGREDQEALIEGLLDGTIDIIATDHAPHTAEEKAQGIERAPFGITGFETAFPLLYTNLVKKGIITLEQLIQFLTEKPADTFGLETGRLKEGRAADITILDLEQEEKIDPTTFLSKGKNTPFAGWKCQGWPVMTLVGGKIVWQKESALV.

The Zn(2+) site is built by H59 and H61. Residues H61 to R63 and N93 contribute to the substrate site. 3 residues coordinate Zn(2+): D151, H178, and H231. Substrate is bound at residue N277. Position 304 (D304) interacts with Zn(2+). The active site involves D304. Substrate contacts are provided by residues H308 and F322–G323.

It belongs to the metallo-dependent hydrolases superfamily. DHOase family. Class I DHOase subfamily. It depends on Zn(2+) as a cofactor.

The enzyme catalyses (S)-dihydroorotate + H2O = N-carbamoyl-L-aspartate + H(+). The protein operates within pyrimidine metabolism; UMP biosynthesis via de novo pathway; (S)-dihydroorotate from bicarbonate: step 3/3. Catalyzes the reversible cyclization of carbamoyl aspartate to dihydroorotate. The polypeptide is Dihydroorotase (Bacillus cytotoxicus (strain DSM 22905 / CIP 110041 / 391-98 / NVH 391-98)).